A 342-amino-acid chain; its full sequence is uncharacterized protein (342 aa).

The MurNAc-LAA domain maps to 3–173; sequence IAIRGGHNFL…LIGYLIAKGI (171 aa).

The protein to C.perfringens CPE1502.

This is an uncharacterized protein from Clostridium perfringens.